The chain runs to 352 residues: Histidinol-phosphate aminotransferase (352 aa).

K221 is subject to N6-(pyridoxal phosphate)lysine.

The protein belongs to the class-II pyridoxal-phosphate-dependent aminotransferase family. Histidinol-phosphate aminotransferase subfamily. In terms of assembly, homodimer. Requires pyridoxal 5'-phosphate as cofactor.

The catalysed reaction is L-histidinol phosphate + 2-oxoglutarate = 3-(imidazol-4-yl)-2-oxopropyl phosphate + L-glutamate. The protein operates within amino-acid biosynthesis; L-histidine biosynthesis; L-histidine from 5-phospho-alpha-D-ribose 1-diphosphate: step 7/9. The protein is Histidinol-phosphate aminotransferase of Staphylococcus aureus (strain MSSA476).